The following is a 272-amino-acid chain: tRNA (guanine-N(7)-)-methyltransferase (272 aa).

The segment covering 1 to 20 (MSTDSESKRRAYREEKEGAR) has biased composition (basic and acidic residues). The tract at residues 1 to 43 (MSTDSESKRRAYREEKEGARKKSVKLAPEATPESKPDLPRKRY) is disordered. S-adenosyl-L-methionine contacts are provided by residues Gly-89, 112–113 (EI), 148–149 (NA), and Cys-168. Asp-171 is a catalytic residue. 246 to 248 (TEE) is an S-adenosyl-L-methionine binding site.

Belongs to the class I-like SAM-binding methyltransferase superfamily. TrmB family. In terms of assembly, forms a complex with TRM82.

It is found in the nucleus. It carries out the reaction guanosine(46) in tRNA + S-adenosyl-L-methionine = N(7)-methylguanosine(46) in tRNA + S-adenosyl-L-homocysteine. It functions in the pathway tRNA modification; N(7)-methylguanine-tRNA biosynthesis. Functionally, catalyzes the formation of N(7)-methylguanine at position 46 (m7G46) in tRNA. The protein is tRNA (guanine-N(7)-)-methyltransferase of Meyerozyma guilliermondii (strain ATCC 6260 / CBS 566 / DSM 6381 / JCM 1539 / NBRC 10279 / NRRL Y-324) (Yeast).